The chain runs to 767 residues: ATP-dependent rRNA helicase SPB4 (767 aa).

The short motif at 28–56 (WTKLTPPLTPWVVSLLSDLGFGQMTPVQA) is the Q motif element. The Helicase ATP-binding domain occupies 59-291 (IPLFVSHKDV…RIGLRNPVRV (233 aa)). 72-79 (AVTGSGKT) lines the ATP pocket. The interval 132-176 (HVQAQQQQDQDEQDEQDEQEAQSDSDTDPDASTALNNKRKSSNHL) is disordered. Acidic residues predominate over residues 140-160 (DQDEQDEQDEQEAQSDSDTDP). The DEAD box signature appears at 239 to 242 (DEAD). The 178-residue stretch at 330–507 (QLARIVLFES…ILEPAEDDAS (178 aa)) folds into the Helicase C-terminal domain. The disordered stretch occupies residues 609-767 (KLSGDQAKPP…NADAEPFFVI (159 aa)). 2 stretches are compositionally biased toward basic and acidic residues: residues 636 to 645 (CDSHDSDDAH) and 659 to 681 (LEREKGAWSAQKERKQARLANRE). A coiled-coil region spans residues 654–746 (KNKRKLEREK…RANSDNDDAM (93 aa)). The span at 690-700 (LKTQAAESSSN) shows a compositional bias: polar residues. Positions 701-746 (AKHEPPQDDHDEHDWNDDYRKLQKDKRQQRQRNKADRANSDNDDAM) are enriched in basic and acidic residues. Low complexity predominate over residues 749 to 761 (NSDSDAAAANADA).

It belongs to the DEAD box helicase family. DDX55/SPB4 subfamily. As to quaternary structure, component of pre-60S ribosomal complexes.

The protein localises to the nucleus. It localises to the nucleolus. It carries out the reaction ATP + H2O = ADP + phosphate + H(+). Its function is as follows. ATP-binding RNA helicase involved in the biogenesis of 60S ribosomal subunits. Binds 90S pre-ribosomal particles and dissociates from pre-60S ribosomal particles after processing of 27SB pre-rRNA. Required for the normal formation of 18S rRNA through the processing of pre-rRNAs at sites A0, A1 and A2, and the normal formation of 25S and 5.8S rRNAs through the processing of pre-rRNAs at sites C1 and C2. This Mycosarcoma maydis (Corn smut fungus) protein is ATP-dependent rRNA helicase SPB4.